We begin with the raw amino-acid sequence, 105 residues long: MAAKIRRNDEVIVLAGKDKGKKGKVTKVLATGKVIVEGINLVKKHQKPVPALGIQGGIVEQEAAIDVSNVAIFNAATGKADRIGFRFEDGKKVRFFKSNNEIVSN.

The protein belongs to the universal ribosomal protein uL24 family. In terms of assembly, part of the 50S ribosomal subunit.

Its function is as follows. One of two assembly initiator proteins, it binds directly to the 5'-end of the 23S rRNA, where it nucleates assembly of the 50S subunit. One of the proteins that surrounds the polypeptide exit tunnel on the outside of the subunit. The sequence is that of Large ribosomal subunit protein uL24 from Vibrio campbellii (strain ATCC BAA-1116).